The sequence spans 230 residues: Homeobox protein Hox-B5 (230 aa).

A disordered region spans residues 1 to 135 (GGGGGNVSGS…GAAGTDGQSP (135 aa)). Polar residues predominate over residues 49–65 (FPGQESSRFRANQNCPL). Positions 87–103 (ATSSAHFTETEETSASS) are enriched in low complexity. The short motif at 137–142 (IFPWMR) is the Antp-type hexapeptide element. The homeobox DNA-binding region spans 155-214 (GKRARTAYTRYQTLELEKEFHFNRYLTRRRRIEIAHTLCLSERQIKIWFQNRRMKWKKDN).

This sequence belongs to the Antp homeobox family.

The protein resides in the nucleus. Functionally, sequence-specific transcription factor which is part of a developmental regulatory system that provides cells with specific positional identities on the anterior-posterior axis. This is Homeobox protein Hox-B5 (hoxb5) from Xenopus laevis (African clawed frog).